The primary structure comprises 341 residues: tRNA N6-adenosine threonylcarbamoyltransferase (341 aa).

Residues histidine 115 and histidine 119 each coordinate Fe cation. Substrate contacts are provided by residues 137-141 (IVSGG), aspartate 170, glycine 183, aspartate 187, and asparagine 276. Residue aspartate 304 coordinates Fe cation.

It belongs to the KAE1 / TsaD family. Requires Fe(2+) as cofactor.

The protein resides in the cytoplasm. The enzyme catalyses L-threonylcarbamoyladenylate + adenosine(37) in tRNA = N(6)-L-threonylcarbamoyladenosine(37) in tRNA + AMP + H(+). Its function is as follows. Required for the formation of a threonylcarbamoyl group on adenosine at position 37 (t(6)A37) in tRNAs that read codons beginning with adenine. Is involved in the transfer of the threonylcarbamoyl moiety of threonylcarbamoyl-AMP (TC-AMP) to the N6 group of A37, together with TsaE and TsaB. TsaD likely plays a direct catalytic role in this reaction. The sequence is that of tRNA N6-adenosine threonylcarbamoyltransferase from Staphylococcus aureus (strain MSSA476).